Consider the following 151-residue polypeptide: Pollen allergen Sal k 5.0101 (151 aa).

Intrachain disulfides connect cysteine 17-cysteine 88, cysteine 20-cysteine 132, and cysteine 41-cysteine 76. An N-linked (GlcNAc...) asparagine glycan is attached at asparagine 43.

This sequence belongs to the Ole e I family. N-glycosylated. Contains fucose monosaccharides in the glycan structure. Expressed in pollen (at protein level).

Its subcellular location is the secreted. In Kali turgidum (Prickly saltwort), this protein is Pollen allergen Sal k 5.0101.